The sequence spans 228 residues: uncharacterized protein (228 aa).

An HTH gntR-type domain is found at 11–78 (PPVNQQIYRI…PQRGSYVNKI (68 aa)). The segment at residues 38-57 (EKEVSVRFNVSRQPVREAFI) is a DNA-binding region (H-T-H motif).

This is an uncharacterized protein from Escherichia coli O6:H1 (strain CFT073 / ATCC 700928 / UPEC).